The chain runs to 409 residues: MNQNQSFLAKMANGSLVLQILVGIIAGIIVATLSESAAQSVAFLGQLFVGALKAIAPILVFILVAASIANQKKNAKTNMRPIVILYLFGTFAAAVTAVLMSFAFPTTLALTLDAAQASPPEGIGEVIHTLLFKLVDNPVNALMTGNYIGILAWGVGLGLALHHATDSTKQVFADVSHGVSQMVRFIIRLAPIGIFGLVSSTFASTGFSAIAGYMHLLLVLLGAMAIMALIINPAIVYFKIRRNPYPLVFTCIRESGVTAFFTRSSAANIPVNMALCEKLKLHEDTYSVSIPLGATINMGGAAITITILTLAAANTMGVQVDILTAILLSVVAGISACGASGVAGGSLLLIPLACSLFGISNDIAMQVVAVGFIIGVIQDSAETGLNSSTDVIFTAAACEAAERKENAGA.

The next 9 membrane-spanning stretches (helical) occupy residues 14–34, 48–68, 82–102, 141–161, 192–212, 216–236, 290–310, 322–342, and 357–377; these read GSLV…ATLS, FVGA…AASI, IVIL…LMSF, ALMT…GLAL, IGIF…AIAG, LLLV…PAIV, IPLG…ILTL, ILTA…ASGV, and FGIS…IGVI.

This sequence belongs to the dicarboxylate/amino acid:cation symporter (DAACS) (TC 2.A.23) family.

The protein resides in the cell inner membrane. The enzyme catalyses L-serine(in) + Na(+)(in) = L-serine(out) + Na(+)(out). It catalyses the reaction L-threonine(in) + Na(+)(in) = L-threonine(out) + Na(+)(out). Its function is as follows. Involved in the import of serine and threonine into the cell, with the concomitant import of sodium (symport system). This chain is Serine/threonine transporter SstT, found in Shewanella woodyi (strain ATCC 51908 / MS32).